The following is a 104-amino-acid chain: MTSKTVTRADLASVVCRKVGLSHTESAALVELVLNEICNSLVRGEAVKLSSFATFQVRNKNERIGRNPKTGVEAPISPRRVVTFKAANVLKQRILNSHRARQKK.

This sequence belongs to the bacterial histone-like protein family. In terms of assembly, heterodimer of an alpha and a beta chain.

Functionally, this protein is one of the two subunits of integration host factor, a specific DNA-binding protein that functions in genetic recombination as well as in transcriptional and translational control. The sequence is that of Integration host factor subunit alpha from Bartonella quintana (strain Toulouse) (Rochalimaea quintana).